We begin with the raw amino-acid sequence, 510 residues long: NAD(P)H-quinone oxidoreductase subunit 2 B, chloroplastic (510 aa).

13 helical membrane passes run 24–44 (LLLFDGSLIVPECILIFGLIL), 57–77 (IPWLYFISSTSLVMSITALLF), 99–119 (IFQFLILLCSTLCIPLSVEYI), 124–144 (MAITEFLLFVLTATLGGMFLC), 149–169 (LITIFVAPECFSLCSYLLSGY), 183–203 (YLLMGGASSSILVHGFSWLYG), 227–247 (PGISIALIFITVGIGFKLSPA), 295–315 (WHLLLETLAILSMILGNLIAI), 323–343 (MLAYSSIGQIGYVIIGIIVGD), 354–374 (YMLFYISMNLGTFACIVLFGL), 395–415 (ALSLALCLLSLGGLPPLAGFF), 418–438 (LYLFWCGWQAGLYFLVLIGLL), and 484–504 (MIVCVIASTIPGISMNPIIAI).

The protein belongs to the complex I subunit 2 family. In terms of assembly, NDH is composed of at least 16 different subunits, 5 of which are encoded in the nucleus.

It localises to the plastid. The protein localises to the chloroplast thylakoid membrane. The catalysed reaction is a plastoquinone + NADH + (n+1) H(+)(in) = a plastoquinol + NAD(+) + n H(+)(out). The enzyme catalyses a plastoquinone + NADPH + (n+1) H(+)(in) = a plastoquinol + NADP(+) + n H(+)(out). Its function is as follows. NDH shuttles electrons from NAD(P)H:plastoquinone, via FMN and iron-sulfur (Fe-S) centers, to quinones in the photosynthetic chain and possibly in a chloroplast respiratory chain. The immediate electron acceptor for the enzyme in this species is believed to be plastoquinone. Couples the redox reaction to proton translocation, and thus conserves the redox energy in a proton gradient. This is NAD(P)H-quinone oxidoreductase subunit 2 B, chloroplastic from Daucus carota (Wild carrot).